Reading from the N-terminus, the 542-residue chain is Membrane protein insertase YidC (542 aa).

The next 6 membrane-spanning stretches (helical) occupy residues 6 to 26, 326 to 346, 350 to 370, 421 to 441, 458 to 478, and 501 to 521; these read NILL…WQTD, LVVD…LLMF, FVGN…GGLY, GGCL…WVLL, LSVQ…MFLM, and VIFT…WLVG.

This sequence belongs to the OXA1/ALB3/YidC family. Type 1 subfamily. As to quaternary structure, interacts with the Sec translocase complex via SecD. Specifically interacts with transmembrane segments of nascent integral membrane proteins during membrane integration.

It localises to the cell inner membrane. In terms of biological role, required for the insertion and/or proper folding and/or complex formation of integral membrane proteins into the membrane. Involved in integration of membrane proteins that insert both dependently and independently of the Sec translocase complex, as well as at least some lipoproteins. Aids folding of multispanning membrane proteins. This is Membrane protein insertase YidC from Shewanella frigidimarina (strain NCIMB 400).